The chain runs to 586 residues: Eukaryotic translation initiation factor 3 subunit D (586 aa).

Disordered stretches follow at residues 16–37 (EDSWGPATPSDNMLEGVPYAPF) and 104–176 (KRTF…REPS). A compositionally biased stretch (gly residues) spans 108–131 (GRGGGTVFRGRAQRGGAGQRGGRA). The segment covering 162–174 (GWKDYDKPQRTRE) has biased composition (basic and acidic residues). Positions 301 to 315 (SIDLVTVNENAADAP) are RNA gate. The segment at 563 to 586 (ANTFEEDDEAADEQEEKATEESEE) is disordered. A compositionally biased stretch (acidic residues) spans 566–577 (FEEDDEAADEQE).

The protein belongs to the eIF-3 subunit D family. As to quaternary structure, component of the eukaryotic translation initiation factor 3 (eIF-3) complex.

The protein resides in the cytoplasm. MRNA cap-binding component of the eukaryotic translation initiation factor 3 (eIF-3) complex, which is involved in protein synthesis of a specialized repertoire of mRNAs and, together with other initiation factors, stimulates binding of mRNA and methionyl-tRNAi to the 40S ribosome. The eIF-3 complex specifically targets and initiates translation of a subset of mRNAs involved in cell proliferation. In the eIF-3 complex, eif3d specifically recognizes and binds the 7-methylguanosine cap of a subset of mRNAs. In Aspergillus clavatus (strain ATCC 1007 / CBS 513.65 / DSM 816 / NCTC 3887 / NRRL 1 / QM 1276 / 107), this protein is Eukaryotic translation initiation factor 3 subunit D.